Here is a 310-residue protein sequence, read N- to C-terminus: O-acetylserine sulfhydrylase (310 aa).

At K44 the chain carries N6-(pyridoxal phosphate)lysine. Pyridoxal 5'-phosphate contacts are provided by residues N74, G178–T182, and S266.

The protein belongs to the cysteine synthase/cystathionine beta-synthase family. In terms of assembly, homodimer. Pyridoxal 5'-phosphate serves as cofactor.

It carries out the reaction O-acetyl-L-serine + hydrogen sulfide = L-cysteine + acetate. Its pathway is amino-acid biosynthesis; L-cysteine biosynthesis; L-cysteine from L-serine: step 2/2. Functionally, catalyzes the conversion of O-acetylserine (OAS) to cysteine through the elimination of acetate and addition of hydrogen sulfide. The protein is O-acetylserine sulfhydrylase (cysK) of Mycobacterium bovis (strain ATCC BAA-935 / AF2122/97).